The sequence spans 188 residues: Insulin-like peptide INSL6 (188 aa).

A signal peptide spans 1–22 (MKQLCCSCLLWLGLLLAPFSQE). Cystine bridges form between Cys33–Cys169, Cys45–Cys182, and Cys168–Cys173. A propeptide spans 53–158 (FSMEEQSPMT…SGLFWGNHPQ (106 aa)) (connecting peptide).

This sequence belongs to the insulin family. Testis and prostate specific.

It localises to the secreted. In terms of biological role, may have a role in sperm development and fertilization. The chain is Insulin-like peptide INSL6 (Insl6) from Rattus norvegicus (Rat).